Here is a 1870-residue protein sequence, read N- to C-terminus: Non-reducing polyketide synthase pkgA (1870 aa).

Residues 40–279 form an N-terminal acylcarrier protein transacylase domain (SAT) region; that stretch reads IQDLIRRLHR…SRHSALPISG (240 aa). The region spanning 416-838 is the Ketosynthase family 3 (KS3) domain; that stretch reads DAKLAVVGMA…GGNTTLLLED (423 aa). Residues 453–492 are disordered; that stretch reads PPDRFDLDAHFDPSGEKENTTTKGSQSNRPLSRQAEQTDP. A compositionally biased stretch (basic and acidic residues) spans 455-472; it reads DRFDLDAHFDPSGEKENT. The segment covering 473-492 has biased composition (polar residues); that stretch reads TTKGSQSNRPLSRQAEQTDP. Residues Cys577, His712, and His755 each act as for beta-ketoacyl synthase activity in the active site. Positions 947 to 1282 are malonyl-CoA:ACP transacylase (MAT) domain; that stretch reads AFSGQGCLYH…QSFASLRRGD (336 aa). Residues 1004-1027 form a disordered region; that stretch reads RCPHRESTPSSDASHDSNTNRTST. The segment covering 1011 to 1027 has biased composition (polar residues); the sequence is TPSSDASHDSNTNRTST. Positions 1364 to 1704 are product template (PT) domain; sequence TSSVQQIIFE…PRALMPVLFP (341 aa). Residues 1368 to 1502 form an N-terminal hotdog fold region; the sequence is QQIIFEEYDE…ATVCYEEAQD (135 aa). The PKS/mFAS DH domain occupies 1368–1700; it reads QQIIFEEYDE…FKAVPRALMP (333 aa). His1400 serves as the catalytic Proton acceptor; for dehydratase activity. The C-terminal hotdog fold stretch occupies residues 1538–1700; the sequence is KGGPRVNNFF…FKAVPRALMP (163 aa). Catalysis depends on Asp1602, which acts as the Proton donor; for dehydratase activity. In terms of domain architecture, Carrier spans 1795–1870; it reads QSQNAQATAC…VQDLVTWLSK (76 aa). Position 1832 is an O-(pantetheine 4'-phosphoryl)serine (Ser1832).

Pantetheine 4'-phosphate is required as a cofactor.

It catalyses the reaction holo-[ACP] + 6 malonyl-CoA + acetyl-CoA + 6 H(+) = 3,5,7,9,11,13-hexaoxotetradecanoyl-[ACP] + 6 CO2 + 7 CoA. The enzyme catalyses holo-[ACP] + 5 malonyl-CoA + acetyl-CoA + 5 H(+) = 3,5,7,9,11-pentaoxododecanoyl-[ACP] + 5 CO2 + 6 CoA. It participates in secondary metabolite biosynthesis. Functionally, non-reducing polyketide synthase; part of the pkg gene cluster that mediates the biosynthesis of dihydrocitreoisocoumarin and 6,8-dihydroxy-3-(2-oxopropyl)-isocoumarin. The non-reducing polyketide synthase pkgA performs the condensation of one acetyl-CoA starter unit with 6 and 5 malonyl-CoA units, respectively. As pkgA lacks a releasing domain, the thioesterase pkgB is necessary to break the thioester bond and release dihydrocitreoisocoumarin and 6,8-dihydroxy-3-(2-oxopropyl)-isocoumarin from pkgA. This is Non-reducing polyketide synthase pkgA from Emericella nidulans (strain FGSC A4 / ATCC 38163 / CBS 112.46 / NRRL 194 / M139) (Aspergillus nidulans).